The sequence spans 123 residues: Small ribosomal subunit protein uS12 (123 aa).

Aspartate 89 is modified (3-methylthioaspartic acid).

The protein belongs to the universal ribosomal protein uS12 family. Part of the 30S ribosomal subunit. Contacts proteins S8 and S17. May interact with IF1 in the 30S initiation complex.

Its function is as follows. With S4 and S5 plays an important role in translational accuracy. Functionally, interacts with and stabilizes bases of the 16S rRNA that are involved in tRNA selection in the A site and with the mRNA backbone. Located at the interface of the 30S and 50S subunits, it traverses the body of the 30S subunit contacting proteins on the other side and probably holding the rRNA structure together. The combined cluster of proteins S8, S12 and S17 appears to hold together the shoulder and platform of the 30S subunit. The sequence is that of Small ribosomal subunit protein uS12 from Prochlorococcus marinus (strain MIT 9211).